Here is a 166-residue protein sequence, read N- to C-terminus: CDP-archaeol synthase (166 aa).

A run of 5 helical transmembrane segments spans residues Met-1–Asn-21, Leu-55–Ile-75, Ile-78–Ile-98, Ala-110–Lys-130, and Ile-131–Leu-151.

The protein belongs to the CDP-archaeol synthase family. The cofactor is Mg(2+).

The protein resides in the cell membrane. It carries out the reaction 2,3-bis-O-(geranylgeranyl)-sn-glycerol 1-phosphate + CTP + H(+) = CDP-2,3-bis-O-(geranylgeranyl)-sn-glycerol + diphosphate. It participates in membrane lipid metabolism; glycerophospholipid metabolism. In terms of biological role, catalyzes the formation of CDP-2,3-bis-(O-geranylgeranyl)-sn-glycerol (CDP-archaeol) from 2,3-bis-(O-geranylgeranyl)-sn-glycerol 1-phosphate (DGGGP) and CTP. This reaction is the third ether-bond-formation step in the biosynthesis of archaeal membrane lipids. This Sulfurisphaera tokodaii (strain DSM 16993 / JCM 10545 / NBRC 100140 / 7) (Sulfolobus tokodaii) protein is CDP-archaeol synthase.